A 498-amino-acid chain; its full sequence is NADPH:adrenodoxin oxidoreductase, mitochondrial (498 aa).

Residues 1 to 37 constitute a mitochondrion transit peptide; the sequence is MSTHKAALCKVQILKLFLISARCVRITRFYGVCGLST. FAD contacts are provided by Ala54, Glu75, Leu83, and Val119. NADP(+) is bound by residues 190–193, 234–235, and Glu246; these read QGNV and RR. FAD is bound by residues Trp404 and 411–413; that span reads GVI. Residue Gly411 participates in NADP(+) binding. The segment covering 469 to 488 has biased composition (basic and acidic residues); the sequence is DSEETRRGETRGKPREKMLD. Positions 469 to 489 are disordered; the sequence is DSEETRRGETRGKPREKMLDV.

This sequence belongs to the ferredoxin--NADP reductase type 1 family. The cofactor is FAD.

The protein localises to the mitochondrion inner membrane. The catalysed reaction is 2 reduced [adrenodoxin] + NADP(+) + H(+) = 2 oxidized [adrenodoxin] + NADPH. It participates in steroid metabolism; cholesterol metabolism. Functionally, serves as the first electron transfer protein in all the mitochondrial P450 systems including cholesterol side chain cleavage in all steroidogenic tissues, steroid 11-beta hydroxylation in the adrenal cortex, 25-OH-vitamin D3-24 hydroxylation in the kidney, and sterol C-27 hydroxylation in the liver. The polypeptide is NADPH:adrenodoxin oxidoreductase, mitochondrial (fdxr) (Salvelinus fontinalis (Brook trout)).